The chain runs to 304 residues: Acetylglutamate kinase (304 aa).

Substrate-binding positions include 74–75, Arg-96, and Asn-201; that span reads GG.

It belongs to the acetylglutamate kinase family. ArgB subfamily.

It is found in the cytoplasm. It carries out the reaction N-acetyl-L-glutamate + ATP = N-acetyl-L-glutamyl 5-phosphate + ADP. Its pathway is amino-acid biosynthesis; L-arginine biosynthesis; N(2)-acetyl-L-ornithine from L-glutamate: step 2/4. Functionally, catalyzes the ATP-dependent phosphorylation of N-acetyl-L-glutamate. This Alkalilimnicola ehrlichii (strain ATCC BAA-1101 / DSM 17681 / MLHE-1) protein is Acetylglutamate kinase.